The sequence spans 301 residues: Asialoglycoprotein receptor 2 (301 aa).

The tract at residues 1–29 (MEKDFQDIQQLDSEENDHQLIGDEEQGSH) is disordered. The Cytoplasmic segment spans residues 1-58 (MEKDFQDIQQLDSEENDHQLIGDEEQGSHVQNLRTENPRWGGQPPSRPFPQRLCSKFR). Phosphoserine is present on S13. Residue C54 is the site of S-palmitoyl cysteine attachment. The helical; Signal-anchor for type II membrane protein transmembrane segment at 59-79 (LSLLALAFNILLLVVICVVSS) threads the bilayer. Residues 80-301 (QSMQLQKEFW…ACERKRDITY (222 aa)) lie on the Extracellular side of the membrane. N97, N119, and N165 each carry an N-linked (GlcNAc...) asparagine glycan. Residues 169–295 (CCPVNWVEFG…QQVNRWACER (127 aa)) form the C-type lectin domain. Cystine bridges form between C170–C181, C198–C293, and C271–C285.

As to quaternary structure, interacts with LASS2. In terms of tissue distribution, expressed exclusively in hepatic parenchymal cells.

The protein localises to the membrane. Its function is as follows. Mediates the endocytosis of plasma glycoproteins to which the terminal sialic acid residue on their complex carbohydrate moieties has been removed. The receptor recognizes terminal galactose and N-acetylgalactosamine units. After ligand binding to the receptor, the resulting complex is internalized and transported to a sorting organelle, where receptor and ligand are disassociated. The receptor then returns to the cell membrane surface. This is Asialoglycoprotein receptor 2 (Asgr2) from Rattus norvegicus (Rat).